We begin with the raw amino-acid sequence, 836 residues long: Transcription factor vrtR2 (836 aa).

Over residues 1-26 the composition is skewed to polar residues; it reads MPSLSSKTSTMQRSCRPQMSACPNQQ. The tract at residues 1-29 is disordered; that stretch reads MPSLSSKTSTMQRSCRPQMSACPNQQQKD. A DNA-binding region (zn(2)-C6 fungal-type) is located at residues 37–63; the sequence is CVLCRDRKLKCDKLDPCSNCTSSGVAC. A disordered region spans residues 72-114; the sequence is PRGRHARTVQTKASTPPDTRRRGSSNESTTAPAPDDGGLGTHI. The segment covering 79-88 has biased composition (polar residues); that stretch reads TVQTKASTPP.

It localises to the nucleus. Functionally, probable transcription factor that regulates expression of the gene cluster that mediates the biosynthesis of viridicatumtoxin, a tetracycline-like fungal meroterpenoid with a unique, fused spirobicyclic ring system. The polypeptide is Transcription factor vrtR2 (Penicillium aethiopicum).